Consider the following 254-residue polypeptide: Phosphonates import ATP-binding protein PhnC (254 aa).

The ABC transporter domain maps to 2-246; it reads IQLKNVSKIY…VFDDIYNGGN (245 aa). 35-42 serves as a coordination point for ATP; the sequence is GLSGAGKS.

It belongs to the ABC transporter superfamily. Phosphonates importer (TC 3.A.1.9.1) family. The complex is composed of two ATP-binding proteins (PhnC), two transmembrane proteins (PhnE) and a solute-binding protein (PhnD).

It localises to the cell membrane. It catalyses the reaction phosphonate(out) + ATP + H2O = phosphonate(in) + ADP + phosphate + H(+). Part of the ABC transporter complex PhnCDE involved in phosphonates import. Responsible for energy coupling to the transport system. In Lactobacillus johnsonii (strain CNCM I-12250 / La1 / NCC 533), this protein is Phosphonates import ATP-binding protein PhnC.